Here is a 175-residue protein sequence, read N- to C-terminus: ATP synthase subunit b, chloroplastic (175 aa).

A helical membrane pass occupies residues 26–44; it reads VINLAVVIGVVVSFVGDAV.

Belongs to the ATPase B chain family. In terms of assembly, F-type ATPases have 2 components, F(1) - the catalytic core - and F(0) - the membrane proton channel. F(1) has five subunits: alpha(3), beta(3), gamma(1), delta(1), epsilon(1). F(0) has four main subunits: a(1), b(1), b'(1) and c(10-14). The alpha and beta chains form an alternating ring which encloses part of the gamma chain. F(1) is attached to F(0) by a central stalk formed by the gamma and epsilon chains, while a peripheral stalk is formed by the delta, b and b' chains.

The protein resides in the plastid. The protein localises to the chloroplast thylakoid membrane. In terms of biological role, f(1)F(0) ATP synthase produces ATP from ADP in the presence of a proton or sodium gradient. F-type ATPases consist of two structural domains, F(1) containing the extramembraneous catalytic core and F(0) containing the membrane proton channel, linked together by a central stalk and a peripheral stalk. During catalysis, ATP synthesis in the catalytic domain of F(1) is coupled via a rotary mechanism of the central stalk subunits to proton translocation. Functionally, component of the F(0) channel, it forms part of the peripheral stalk, linking F(1) to F(0). This Tupiella akineta (Green alga) protein is ATP synthase subunit b, chloroplastic.